A 356-amino-acid polypeptide reads, in one-letter code: Chitin elicitor-binding protein (356 aa).

The N-terminal stretch at 1–28 (MASLTAALATPAAAALLLLVLLAAPASA) is a signal peptide. An N-linked (GlcNAc...) asparagine glycan is attached at N30. Intrachain disulfides connect C33-C100, C41-C164, C98-C162, and C100-C164. Position 50 to 51 (50 to 51 (PN)) interacts with chitin. N-linked (GlcNAc...) asparagine glycosylation is found at N63 and N89. LysM domains follow at residues 111-158 (PIYV…TLWI) and 175-219 (LAYS…ILDV). Residues 117–123 (PQDGLDA), N142, 145–152 (PDPNKINV), T155, and G182 each bind chitin. N-linked (GlcNAc...) asparagine glycosylation occurs at N151. A glycan (N-linked (GlcNAc...) asparagine) is linked at N184. Residues S186 and 211-213 (LQM) contribute to the chitin site. Disulfide bonds link C224–C257 and C252–C274. Residues N265, N281, N290, N306, and N319 are each glycosylated (N-linked (GlcNAc...) asparagine). A helical membrane pass occupies residues 336-356 (RSMWSMSVISFHMVLIIICFL).

In terms of assembly, forms homooligomer. Interacts with CERK1. Binds to chitin oligosaccharide elicitor. Interacts with LYP4 and LYP6. In terms of processing, N-glycosylated. Expressed in seedlings, roots, shoots, stems and flowers.

It is found in the cell membrane. Functionally, chitin elicitor-binding protein involved in the perception and transduction of chitin oligosaccharide elicitor signal for defense responses. The polypeptide is Chitin elicitor-binding protein (Oryza sativa subsp. japonica (Rice)).